The following is a 413-amino-acid chain: O-methyltransferase kntB (413 aa).

S-adenosyl-L-methionine-binding positions include 255 to 256 (GG), Asp280, 302 to 303 (NF), and Arg319. Catalysis depends on His322, which acts as the Proton acceptor.

This sequence belongs to the class I-like SAM-binding methyltransferase superfamily. Cation-independent O-methyltransferase family. Requires S-adenosyl-L-methionine as cofactor.

The protein operates within secondary metabolite biosynthesis. Its function is as follows. Non-reducing polyketide synthase; part of the gene cluster that mediates the biosynthesis of the bicoumarin kotanin. The non-reducing polyketide synthase ktnS first catalyzes the formation of the pentaketidic 4,7-dihydroxy-5-methylcoumarin from acetyl coenzyme A and 4 malonyl coenzyme A molecules. Further O-methylation by ktnB leads to the formation of 7-demethylsiderin. Then, an oxidative phenol coupling catalyzed by the cytochrome P450 monooxygenase ktnC forms the 8,8'-dimer P-orlandin via dimerization the monomeric precursor, 7-demethylsiderin. P-orlandin is subsequently O-methylated in a stepwise fashion to demethylkotanin and kotanin. In Aspergillus niger (strain ATCC MYA-4892 / CBS 513.88 / FGSC A1513), this protein is O-methyltransferase kntB.